A 248-amino-acid polypeptide reads, in one-letter code: Enolase-phosphatase E1 (248 aa).

The Mg(2+) site is built by aspartate 14 and glutamate 16. Substrate-binding positions include 145 to 146 and lysine 179; that span reads SS. Aspartate 204 is a Mg(2+) binding site.

The protein belongs to the HAD-like hydrolase superfamily. MasA/MtnC family. In terms of assembly, monomer. The cofactor is Mg(2+).

Its subcellular location is the cytoplasm. It is found in the nucleus. The enzyme catalyses 5-methylsulfanyl-2,3-dioxopentyl phosphate + H2O = 1,2-dihydroxy-5-(methylsulfanyl)pent-1-en-3-one + phosphate. It participates in amino-acid biosynthesis; L-methionine biosynthesis via salvage pathway; L-methionine from S-methyl-5-thio-alpha-D-ribose 1-phosphate: step 3/6. It functions in the pathway amino-acid biosynthesis; L-methionine biosynthesis via salvage pathway; L-methionine from S-methyl-5-thio-alpha-D-ribose 1-phosphate: step 4/6. Bifunctional enzyme that catalyzes the enolization of 2,3-diketo-5-methylthiopentyl-1-phosphate (DK-MTP-1-P) into the intermediate 2-hydroxy-3-keto-5-methylthiopentenyl-1-phosphate (HK-MTPenyl-1-P), which is then dephosphorylated to form the acireductone 1,2-dihydroxy-3-keto-5-methylthiopentene (DHK-MTPene). This chain is Enolase-phosphatase E1, found in Caenorhabditis elegans.